A 323-amino-acid polypeptide reads, in one-letter code: Lipoyl synthase (323 aa).

[4Fe-4S] cluster is bound by residues Cys61, Cys66, Cys72, Cys87, Cys91, Cys94, and Ser300. The 217-residue stretch at 73–289 (WDKKHATFMI…ETVAYSKGFL (217 aa)) folds into the Radical SAM core domain.

It belongs to the radical SAM superfamily. Lipoyl synthase family. It depends on [4Fe-4S] cluster as a cofactor.

It is found in the cytoplasm. The catalysed reaction is [[Fe-S] cluster scaffold protein carrying a second [4Fe-4S](2+) cluster] + N(6)-octanoyl-L-lysyl-[protein] + 2 oxidized [2Fe-2S]-[ferredoxin] + 2 S-adenosyl-L-methionine + 4 H(+) = [[Fe-S] cluster scaffold protein] + N(6)-[(R)-dihydrolipoyl]-L-lysyl-[protein] + 4 Fe(3+) + 2 hydrogen sulfide + 2 5'-deoxyadenosine + 2 L-methionine + 2 reduced [2Fe-2S]-[ferredoxin]. The protein operates within protein modification; protein lipoylation via endogenous pathway; protein N(6)-(lipoyl)lysine from octanoyl-[acyl-carrier-protein]: step 2/2. Catalyzes the radical-mediated insertion of two sulfur atoms into the C-6 and C-8 positions of the octanoyl moiety bound to the lipoyl domains of lipoate-dependent enzymes, thereby converting the octanoylated domains into lipoylated derivatives. The polypeptide is Lipoyl synthase (Rhizobium etli (strain ATCC 51251 / DSM 11541 / JCM 21823 / NBRC 15573 / CFN 42)).